Here is a 78-residue protein sequence, read N- to C-terminus: Major outer membrane lipoprotein Lpp (78 aa).

Positions 1 to 20 (MNRTKLVLGAVILGSTLLAG) are cleaved as a signal peptide. A lipid anchor (N-palmitoyl cysteine) is attached at Cys-21. Cys-21 is lipidated: S-diacylglycerol cysteine. Residues 22–75 (SSNAKIDQLSTDVQTLNAKVDQLSNDVTAIRSDVQAAKDDAARANQRLDNQAHS) adopt a coiled-coil conformation. 2 consecutive repeats follow at residues 24-34 (NAKIDQLSTDV) and 38-48 (NAKVDQLSNDV). Residue Lys-78 is modified to N6-murein peptidoglycan lysine.

The protein belongs to the Lpp family. Homotrimer.

The protein localises to the cell outer membrane. It localises to the secreted. It is found in the cell wall. Its function is as follows. A highly abundant outer membrane lipoprotein that controls the distance between the inner and outer membranes. The only protein known to be covalently linked to the peptidoglycan network (PGN). Also non-covalently binds the PGN. The link between the cell outer membrane and PGN contributes to maintenance of the structural and functional integrity of the cell envelope, and maintains the correct distance between the PGN and the outer membrane. The chain is Major outer membrane lipoprotein Lpp from Erwinia amylovora (Fire blight bacteria).